The primary structure comprises 158 residues: MHTKAIYPGTFDPVTNGHTDLIERAAKLFKQVVIGIAANPSKQPRFSLEERVKLVKRVTEHLDNVEVVGFSGLLVDFAKEQNASVLVRGLRAVSDFEYEFQLANMNRRLSADLESVFLTPAEENSFISSTLVKEVALHGGDVSQFVHEEVAKALQKKD.

Thr10 is a substrate binding site. ATP-binding positions include 10–11 (TF) and His18. Residues Lys42, Leu74, and Arg88 each contribute to the substrate site. Residues 89-91 (GLR), Glu99, and 124-130 (NSFISST) each bind ATP.

It belongs to the bacterial CoaD family. In terms of assembly, homohexamer. Requires Mg(2+) as cofactor.

It is found in the cytoplasm. It carries out the reaction (R)-4'-phosphopantetheine + ATP + H(+) = 3'-dephospho-CoA + diphosphate. It participates in cofactor biosynthesis; coenzyme A biosynthesis; CoA from (R)-pantothenate: step 4/5. Its function is as follows. Reversibly transfers an adenylyl group from ATP to 4'-phosphopantetheine, yielding dephospho-CoA (dPCoA) and pyrophosphate. The chain is Phosphopantetheine adenylyltransferase from Shewanella loihica (strain ATCC BAA-1088 / PV-4).